The chain runs to 416 residues: Serine hydroxymethyltransferase (416 aa).

Residues Leu120 and 124–126 (GHL) each bind (6S)-5,6,7,8-tetrahydrofolate. Lys230 carries the N6-(pyridoxal phosphate)lysine modification. Residue Glu246 participates in (6S)-5,6,7,8-tetrahydrofolate binding.

The protein belongs to the SHMT family. As to quaternary structure, homodimer. Requires pyridoxal 5'-phosphate as cofactor.

It localises to the cytoplasm. The enzyme catalyses (6R)-5,10-methylene-5,6,7,8-tetrahydrofolate + glycine + H2O = (6S)-5,6,7,8-tetrahydrofolate + L-serine. The protein operates within one-carbon metabolism; tetrahydrofolate interconversion. Its pathway is amino-acid biosynthesis; glycine biosynthesis; glycine from L-serine: step 1/1. Catalyzes the reversible interconversion of serine and glycine with tetrahydrofolate (THF) serving as the one-carbon carrier. This reaction serves as the major source of one-carbon groups required for the biosynthesis of purines, thymidylate, methionine, and other important biomolecules. Also exhibits THF-independent aldolase activity toward beta-hydroxyamino acids, producing glycine and aldehydes, via a retro-aldol mechanism. The sequence is that of Serine hydroxymethyltransferase from Onion yellows phytoplasma (strain OY-M).